The primary structure comprises 237 residues: Lectin alpha chain (237 aa).

Positions 8 and 10 each coordinate Mn(2+). Ca(2+)-binding residues include Asp10, Tyr12, Asn14, and Asp19. A carbohydrate-binding residues include Tyr12 and Asn14. The Mn(2+) site is built by Asp19 and His24. Leu99–Tyr100 lines the a carbohydrate pocket. Asp208 serves as a coordination point for Ca(2+). Arg228 is an a carbohydrate binding site.

The protein belongs to the leguminous lectin family. As to quaternary structure, homodimer and homotetramer. Oligomerization is pH-dependent with homotetramers forming at pH 4 and above.

In terms of biological role, D-mannose/D-glucose-binding lectin. Has anti-inflammatory activity in animal models when applied intravenously. Has antinociceptive activity in mice when applied intravenously. This is Lectin alpha chain from Canavalia boliviana.